The primary structure comprises 152 residues: Small integral membrane protein 28 (152 aa).

A helical transmembrane segment spans residues 52–72; that stretch reads FLCILLPATILLFLAFLLLFL. Positions 117 to 152 are disordered; the sequence is PLPPEATLPSQCLPPSYEEATRNPPGEEAQGCSPSV.

Its subcellular location is the membrane. The polypeptide is Small integral membrane protein 28 (Homo sapiens (Human)).